The primary structure comprises 42 residues: Perlinhibin-related protein (42 aa).

Contains four disulfide bonds.

Its function is as follows. Inhibitor of shell growth. This is Perlinhibin-related protein from Haliotis laevigata (Smooth Australian abalone).